A 157-amino-acid polypeptide reads, in one-letter code: Small ribosomal subunit protein uS7 (157 aa).

Belongs to the universal ribosomal protein uS7 family. Part of the 30S ribosomal subunit. Contacts proteins S9 and S11.

Its function is as follows. One of the primary rRNA binding proteins, it binds directly to 16S rRNA where it nucleates assembly of the head domain of the 30S subunit. Is located at the subunit interface close to the decoding center, probably blocks exit of the E-site tRNA. This Chlamydia trachomatis serovar A (strain ATCC VR-571B / DSM 19440 / HAR-13) protein is Small ribosomal subunit protein uS7.